Consider the following 127-residue polypeptide: MAKPTRKRRVKKNIESGIAHIHATFNNTIVMITDVHGNAIAWSSAGALGFKGSRKSTPFAAQMASEAAAKSAQEHGLKTVEVTVKGPGSGRESAIRALAAAGLEVTAIRDVTPVPHNGARPPKRRRV.

The protein belongs to the universal ribosomal protein uS11 family. As to quaternary structure, part of the 30S ribosomal subunit. Interacts with proteins S7 and S18. Binds to IF-3.

Located on the platform of the 30S subunit, it bridges several disparate RNA helices of the 16S rRNA. Forms part of the Shine-Dalgarno cleft in the 70S ribosome. This is Small ribosomal subunit protein uS11 from Streptococcus suis (strain 98HAH33).